Reading from the N-terminus, the 521-residue chain is GMP synthase [glutamine-hydrolyzing] (521 aa).

The Glutamine amidotransferase type-1 domain maps to 9 to 203 (KILILDFGSQ…VSDICQCKKN (195 aa)). Cys-86 (nucleophile) is an active-site residue. Residues His-177 and Glu-179 contribute to the active site. The region spanning 204–396 (WTTDNIITKL…LGLPTHMLNC (193 aa)) is the GMPS ATP-PPase domain. 231–237 (SGGVDSS) is a binding site for ATP.

As to quaternary structure, homodimer.

It catalyses the reaction XMP + L-glutamine + ATP + H2O = GMP + L-glutamate + AMP + diphosphate + 2 H(+). It functions in the pathway purine metabolism; GMP biosynthesis; GMP from XMP (L-Gln route): step 1/1. Its function is as follows. Catalyzes the synthesis of GMP from XMP. This is GMP synthase [glutamine-hydrolyzing] from Vesicomyosocius okutanii subsp. Calyptogena okutanii (strain HA).